A 184-amino-acid polypeptide reads, in one-letter code: Signal peptidase complex catalytic subunit SEC11 (184 aa).

The Cytoplasmic portion of the chain corresponds to 1 to 28; that stretch reads MDFIKEQYNSLVLDLRKTFRNKRDGLSH. A helical; Signal-anchor for type II membrane protein membrane pass occupies residues 29–49; it reads ILNVICLLLNALMIWKLLVVF. Topologically, residues 50-184 are lumenal; that stretch reads TGCESPVVVV…MLIMILMGYE (135 aa). Active-site charge relay system residues include Ser-63, His-101, and Asp-127. Residues 170-181 are C-terminal short (CTS) helix; the sequence is AIVSIMLIMILM.

This sequence belongs to the peptidase S26B family. In terms of assembly, component of the signal peptidase complex (SPC) composed of a catalytic subunit SEC11/SPC21 and three accessory subunits SPC25, SPC3/SPC22, SPC1/SPC12. Within the complex, interacts with SPC25. The complex induces a local thinning of the ER membrane which is used to measure the length of the signal peptide (SP) h-region of protein substrates. This ensures the selectivity of the complex towards h-regions shorter than 18-20 amino acids. The complex interacts with the SEC61 channel-forming translocon complex and is involved in the import of classical signal sequence-containing proteins. Post-translationally, phosphorylated. Phosphorylation increases catalytic activity.

It is found in the endoplasmic reticulum membrane. It catalyses the reaction Cleavage of hydrophobic, N-terminal signal or leader sequences from secreted and periplasmic proteins.. Phosphorylation increases catalytic activity. Ca(2+) slightly increases catalytic activity in vitro. In terms of biological role, catalytic component of the signal peptidase complex (SPC) which catalyzes the cleavage of N-terminal signal sequences from nascent proteins as they are translocated into the lumen of the endoplasmic reticulum. Specifically cleaves N-terminal signal peptides that contain a hydrophobic alpha-helix (h-region) shorter than 18-20 amino acids. This Plasmodium falciparum (isolate 3D7) protein is Signal peptidase complex catalytic subunit SEC11.